The following is a 262-amino-acid chain: Small ribosomal subunit protein eS4B (262 aa).

The S4 RNA-binding domain occupies 42–105 (LPLIVFLRNR…GEHFRLVYDI (64 aa)). Ser223 carries the post-translational modification Phosphoserine.

Belongs to the eukaryotic ribosomal protein eS4 family. Component of the small ribosomal subunit (SSU). Mature yeast ribosomes consist of a small (40S) and a large (60S) subunit. The 40S small subunit contains 1 molecule of ribosomal RNA (18S rRNA) and at least 33 different proteins. The large 60S subunit contains 3 rRNA molecules (25S, 5.8S and 5S rRNA) and at least 46 different proteins.

It localises to the cytoplasm. It is found in the nucleus. The protein localises to the nucleolus. Component of the ribosome, a large ribonucleoprotein complex responsible for the synthesis of proteins in the cell. The small ribosomal subunit (SSU) binds messenger RNAs (mRNAs) and translates the encoded message by selecting cognate aminoacyl-transfer RNA (tRNA) molecules. The large subunit (LSU) contains the ribosomal catalytic site termed the peptidyl transferase center (PTC), which catalyzes the formation of peptide bonds, thereby polymerizing the amino acids delivered by tRNAs into a polypeptide chain. The nascent polypeptides leave the ribosome through a tunnel in the LSU and interact with protein factors that function in enzymatic processing, targeting, and the membrane insertion of nascent chains at the exit of the ribosomal tunnel. The polypeptide is Small ribosomal subunit protein eS4B (rps402) (Schizosaccharomyces pombe (strain 972 / ATCC 24843) (Fission yeast)).